Consider the following 391-residue polypeptide: Probable tRNA sulfurtransferase (391 aa).

The region spanning 60 to 167 is the THUMP domain; the sequence is DETVAALQRV…NKAYVYSNTL (108 aa). Residues 184–185, 209–210, arginine 266, glycine 288, and glutamine 297 contribute to the ATP site; these read LL and YF.

The protein belongs to the ThiI family.

Its subcellular location is the cytoplasm. The enzyme catalyses [ThiI sulfur-carrier protein]-S-sulfanyl-L-cysteine + a uridine in tRNA + 2 reduced [2Fe-2S]-[ferredoxin] + ATP + H(+) = [ThiI sulfur-carrier protein]-L-cysteine + a 4-thiouridine in tRNA + 2 oxidized [2Fe-2S]-[ferredoxin] + AMP + diphosphate. It catalyses the reaction [ThiS sulfur-carrier protein]-C-terminal Gly-Gly-AMP + S-sulfanyl-L-cysteinyl-[cysteine desulfurase] + AH2 = [ThiS sulfur-carrier protein]-C-terminal-Gly-aminoethanethioate + L-cysteinyl-[cysteine desulfurase] + A + AMP + 2 H(+). The protein operates within cofactor biosynthesis; thiamine diphosphate biosynthesis. Catalyzes the ATP-dependent transfer of a sulfur to tRNA to produce 4-thiouridine in position 8 of tRNAs, which functions as a near-UV photosensor. Also catalyzes the transfer of sulfur to the sulfur carrier protein ThiS, forming ThiS-thiocarboxylate. This is a step in the synthesis of thiazole, in the thiamine biosynthesis pathway. The sulfur is donated as persulfide by IscS. In Lachnoclostridium phytofermentans (strain ATCC 700394 / DSM 18823 / ISDg) (Clostridium phytofermentans), this protein is Probable tRNA sulfurtransferase.